Here is a 118-residue protein sequence, read N- to C-terminus: Ribosome-binding factor A (118 aa).

The protein belongs to the RbfA family. As to quaternary structure, monomer. Binds 30S ribosomal subunits, but not 50S ribosomal subunits or 70S ribosomes.

It is found in the cytoplasm. In terms of biological role, one of several proteins that assist in the late maturation steps of the functional core of the 30S ribosomal subunit. Associates with free 30S ribosomal subunits (but not with 30S subunits that are part of 70S ribosomes or polysomes). Required for efficient processing of 16S rRNA. May interact with the 5'-terminal helix region of 16S rRNA. The chain is Ribosome-binding factor A from Dehalococcoides mccartyi (strain ATCC BAA-2266 / KCTC 15142 / 195) (Dehalococcoides ethenogenes (strain 195)).